Consider the following 407-residue polypeptide: Imidazolonepropionase (407 aa).

Fe(3+) contacts are provided by His-68 and His-70. Zn(2+) contacts are provided by His-68 and His-70. 4-imidazolone-5-propanoate is bound by residues Arg-77, Tyr-140, and His-173. Residue Tyr-140 participates in N-formimidoyl-L-glutamate binding. His-236 serves as a coordination point for Fe(3+). Residue His-236 participates in Zn(2+) binding. Gln-239 contacts 4-imidazolone-5-propanoate. Asp-311 contacts Fe(3+). Asp-311 lines the Zn(2+) pocket. Residues Asn-313 and Gly-315 each coordinate N-formimidoyl-L-glutamate. Residue Thr-316 participates in 4-imidazolone-5-propanoate binding.

The protein belongs to the metallo-dependent hydrolases superfamily. HutI family. Zn(2+) serves as cofactor. The cofactor is Fe(3+).

The protein resides in the cytoplasm. It carries out the reaction 4-imidazolone-5-propanoate + H2O = N-formimidoyl-L-glutamate. The protein operates within amino-acid degradation; L-histidine degradation into L-glutamate; N-formimidoyl-L-glutamate from L-histidine: step 3/3. In terms of biological role, catalyzes the hydrolytic cleavage of the carbon-nitrogen bond in imidazolone-5-propanoate to yield N-formimidoyl-L-glutamate. It is the third step in the universal histidine degradation pathway. In Stenotrophomonas maltophilia (strain R551-3), this protein is Imidazolonepropionase.